The sequence spans 320 residues: HPr kinase/phosphorylase (320 aa).

Active-site residues include His-141 and Lys-162. Position 156 to 163 (156 to 163 (GHSGLGKS)) interacts with ATP. Ser-163 contacts Mg(2+). The active-site Proton acceptor; for phosphorylation activity. Proton donor; for dephosphorylation activity is Asp-180. An important for the catalytic mechanism of both phosphorylation and dephosphorylation region spans residues 204-213 (LEVRGLGILN). A Mg(2+)-binding site is contributed by Glu-205. Arg-248 is a catalytic residue. Residues 269–274 (PVAVGR) form an important for the catalytic mechanism of dephosphorylation region.

Belongs to the HPrK/P family. In terms of assembly, homohexamer. Requires Mg(2+) as cofactor.

It carries out the reaction [HPr protein]-L-serine + ATP = [HPr protein]-O-phospho-L-serine + ADP + H(+). The enzyme catalyses [HPr protein]-O-phospho-L-serine + phosphate + H(+) = [HPr protein]-L-serine + diphosphate. In terms of biological role, catalyzes the ATP- as well as the pyrophosphate-dependent phosphorylation of a specific serine residue in HPr, a phosphocarrier protein of the phosphoenolpyruvate-dependent sugar phosphotransferase system (PTS). HprK/P also catalyzes the pyrophosphate-producing, inorganic phosphate-dependent dephosphorylation (phosphorolysis) of seryl-phosphorylated HPr (P-Ser-HPr). This Neisseria meningitidis serogroup A / serotype 4A (strain DSM 15465 / Z2491) protein is HPr kinase/phosphorylase.